The sequence spans 372 residues: Peptide chain release factor 1 (372 aa).

N5-methylglutamine is present on Q237.

Belongs to the prokaryotic/mitochondrial release factor family. Post-translationally, methylated by PrmC. Methylation increases the termination efficiency of RF1.

It localises to the cytoplasm. Its function is as follows. Peptide chain release factor 1 directs the termination of translation in response to the peptide chain termination codons UAG and UAA. This is Peptide chain release factor 1 from Anaeromyxobacter sp. (strain Fw109-5).